The primary structure comprises 352 residues: Fc receptor-like A (352 aa).

The N-terminal stretch at 1-30 (MKLSCTLTQWALYVCPAVLLATQMLLAASS) is a signal peptide. Residues 46 to 65 (CQAAAEEDEGDEDDGDMTQS) are disordered. Acidic residues predominate over residues 50–61 (AEEDEGDEDDGD). 2 Ig-like C2-type domains span residues 80–169 (PFHL…EAAS) and 182–260 (PVLK…RQIS). 2 cysteine pairs are disulfide-bonded: C109/C153 and C202/C250. The segment at 275–310 (KPTASETPPTEALGPLPPPPASSAEQPRFSSPDPHL) is disordered.

As to quaternary structure, monomer or homodimer; disulfide-linked. In terms of tissue distribution, highly expressed in spleen. Expressed in immature B-cell and B-cell lines.

The protein localises to the cytoplasm. Functionally, may be implicated in B-cell differentiation and lymphomagenesis. The chain is Fc receptor-like A (Fcrla) from Mus musculus (Mouse).